The chain runs to 227 residues: Cytochrome c oxidase subunit 2 (227 aa).

Over 1 to 14 (MAYPMQLGFQDATS) the chain is Mitochondrial intermembrane. Residues 15–45 (PIMEELLHFHDHTLMIVFLISSLVLYIISLM) form a helical membrane-spanning segment. Residues 46 to 59 (LTTKLTHTSTMDAQ) lie on the Mitochondrial matrix side of the membrane. Residues 60 to 87 (EVETVWTILPAIILILIALPSLRILYMM) traverse the membrane as a helical segment. Topologically, residues 88-227 (DEINNPSLTV…HFEEWSASMS (140 aa)) are mitochondrial intermembrane. The Cu cation site is built by His-161, Cys-196, Glu-198, Cys-200, His-204, and Met-207. Mg(2+) is bound at residue Glu-198.

The protein belongs to the cytochrome c oxidase subunit 2 family. As to quaternary structure, component of the cytochrome c oxidase (complex IV, CIV), a multisubunit enzyme composed of 14 subunits. The complex is composed of a catalytic core of 3 subunits MT-CO1, MT-CO2 and MT-CO3, encoded in the mitochondrial DNA, and 11 supernumerary subunits COX4I, COX5A, COX5B, COX6A, COX6B, COX6C, COX7A, COX7B, COX7C, COX8 and NDUFA4, which are encoded in the nuclear genome. The complex exists as a monomer or a dimer and forms supercomplexes (SCs) in the inner mitochondrial membrane with NADH-ubiquinone oxidoreductase (complex I, CI) and ubiquinol-cytochrome c oxidoreductase (cytochrome b-c1 complex, complex III, CIII), resulting in different assemblies (supercomplex SCI(1)III(2)IV(1) and megacomplex MCI(2)III(2)IV(2)). Found in a complex with TMEM177, COA6, COX18, COX20, SCO1 and SCO2. Interacts with TMEM177 in a COX20-dependent manner. Interacts with COX20. Interacts with COX16. Cu cation serves as cofactor.

The protein localises to the mitochondrion inner membrane. The catalysed reaction is 4 Fe(II)-[cytochrome c] + O2 + 8 H(+)(in) = 4 Fe(III)-[cytochrome c] + 2 H2O + 4 H(+)(out). Its function is as follows. Component of the cytochrome c oxidase, the last enzyme in the mitochondrial electron transport chain which drives oxidative phosphorylation. The respiratory chain contains 3 multisubunit complexes succinate dehydrogenase (complex II, CII), ubiquinol-cytochrome c oxidoreductase (cytochrome b-c1 complex, complex III, CIII) and cytochrome c oxidase (complex IV, CIV), that cooperate to transfer electrons derived from NADH and succinate to molecular oxygen, creating an electrochemical gradient over the inner membrane that drives transmembrane transport and the ATP synthase. Cytochrome c oxidase is the component of the respiratory chain that catalyzes the reduction of oxygen to water. Electrons originating from reduced cytochrome c in the intermembrane space (IMS) are transferred via the dinuclear copper A center (CU(A)) of subunit 2 and heme A of subunit 1 to the active site in subunit 1, a binuclear center (BNC) formed by heme A3 and copper B (CU(B)). The BNC reduces molecular oxygen to 2 water molecules using 4 electrons from cytochrome c in the IMS and 4 protons from the mitochondrial matrix. This is Cytochrome c oxidase subunit 2 (MT-CO2) from Antilocapra americana (Pronghorn).